Consider the following 527-residue polypeptide: Probable malate:quinone oxidoreductase 2 (527 aa).

The protein belongs to the MQO family. It depends on FAD as a cofactor.

The enzyme catalyses (S)-malate + a quinone = a quinol + oxaloacetate. It functions in the pathway carbohydrate metabolism; tricarboxylic acid cycle; oxaloacetate from (S)-malate (quinone route): step 1/1. The protein is Probable malate:quinone oxidoreductase 2 of Pseudomonas putida (strain ATCC 47054 / DSM 6125 / CFBP 8728 / NCIMB 11950 / KT2440).